Consider the following 61-residue polypeptide: Small ribosomal subunit protein uS14 (61 aa).

Residues cysteine 24, cysteine 27, cysteine 40, and cysteine 43 each contribute to the Zn(2+) site.

Belongs to the universal ribosomal protein uS14 family. Zinc-binding uS14 subfamily. In terms of assembly, part of the 30S ribosomal subunit. Contacts proteins S3 and S10. It depends on Zn(2+) as a cofactor.

Binds 16S rRNA, required for the assembly of 30S particles and may also be responsible for determining the conformation of the 16S rRNA at the A site. This Mycobacterium leprae (strain Br4923) protein is Small ribosomal subunit protein uS14.